A 306-amino-acid chain; its full sequence is Acetyl-coenzyme A carboxylase carboxyl transferase subunit beta (306 aa).

A CoA carboxyltransferase N-terminal domain is found at 27 to 296; sequence LWHKCPSCEA…PEFVAAPVEP (270 aa). Residues Cys-31, Cys-34, Cys-50, and Cys-53 each contribute to the Zn(2+) site. The C4-type zinc finger occupies 31 to 53; the sequence is CPSCEAVLYRPELEKTLDVCPKC.

It belongs to the AccD/PCCB family. As to quaternary structure, acetyl-CoA carboxylase is a heterohexamer composed of biotin carboxyl carrier protein (AccB), biotin carboxylase (AccC) and two subunits each of ACCase subunit alpha (AccA) and ACCase subunit beta (AccD). Zn(2+) is required as a cofactor.

The protein localises to the cytoplasm. It carries out the reaction N(6)-carboxybiotinyl-L-lysyl-[protein] + acetyl-CoA = N(6)-biotinyl-L-lysyl-[protein] + malonyl-CoA. It participates in lipid metabolism; malonyl-CoA biosynthesis; malonyl-CoA from acetyl-CoA: step 1/1. Its function is as follows. Component of the acetyl coenzyme A carboxylase (ACC) complex. Biotin carboxylase (BC) catalyzes the carboxylation of biotin on its carrier protein (BCCP) and then the CO(2) group is transferred by the transcarboxylase to acetyl-CoA to form malonyl-CoA. The protein is Acetyl-coenzyme A carboxylase carboxyl transferase subunit beta of Pseudomonas fluorescens (strain ATCC BAA-477 / NRRL B-23932 / Pf-5).